A 179-amino-acid chain; its full sequence is Probable DNA-directed RNA polymerase subunit delta (179 aa).

One can recognise an HTH HARE-type domain in the interval 14–81; it reads MSLVELAYEI…GDQRWGLRSW (68 aa). A disordered region spans residues 108-179; the sequence is VVEEDFDEIE…DDLDDNEEEK (72 aa). Residues 109–179 show a composition bias toward acidic residues; the sequence is VEEDFDEIEE…DDLDDNEEEK (71 aa).

This sequence belongs to the RpoE family. As to quaternary structure, RNAP is composed of a core of 2 alpha, a beta and a beta' subunits. The core is associated with a delta subunit and one of several sigma factors.

Its function is as follows. Participates in both the initiation and recycling phases of transcription. In the presence of the delta subunit, RNAP displays an increased specificity of transcription, a decreased affinity for nucleic acids, and an increased efficiency of RNA synthesis because of enhanced recycling. The polypeptide is Probable DNA-directed RNA polymerase subunit delta (Bacillus pumilus (strain SAFR-032)).